A 373-amino-acid chain; its full sequence is Queuine tRNA-ribosyltransferase (373 aa).

Catalysis depends on Asp-90, which acts as the Proton acceptor. Residues 90 to 94 (DSGGF), Asp-144, Gln-193, and Gly-220 each bind substrate. The tract at residues 251 to 257 (GVGTPED) is RNA binding. The active-site Nucleophile is the Asp-270. Residues 275-279 (TRNAR) form an RNA binding; important for wobble base 34 recognition region. The Zn(2+) site is built by Cys-308, Cys-310, Cys-313, and His-339.

Belongs to the queuine tRNA-ribosyltransferase family. As to quaternary structure, homodimer. Within each dimer, one monomer is responsible for RNA recognition and catalysis, while the other monomer binds to the replacement base PreQ1. Zn(2+) is required as a cofactor.

It catalyses the reaction 7-aminomethyl-7-carbaguanine + guanosine(34) in tRNA = 7-aminomethyl-7-carbaguanosine(34) in tRNA + guanine. Its pathway is tRNA modification; tRNA-queuosine biosynthesis. Functionally, catalyzes the base-exchange of a guanine (G) residue with the queuine precursor 7-aminomethyl-7-deazaguanine (PreQ1) at position 34 (anticodon wobble position) in tRNAs with GU(N) anticodons (tRNA-Asp, -Asn, -His and -Tyr). Catalysis occurs through a double-displacement mechanism. The nucleophile active site attacks the C1' of nucleotide 34 to detach the guanine base from the RNA, forming a covalent enzyme-RNA intermediate. The proton acceptor active site deprotonates the incoming PreQ1, allowing a nucleophilic attack on the C1' of the ribose to form the product. After dissociation, two additional enzymatic reactions on the tRNA convert PreQ1 to queuine (Q), resulting in the hypermodified nucleoside queuosine (7-(((4,5-cis-dihydroxy-2-cyclopenten-1-yl)amino)methyl)-7-deazaguanosine). In Campylobacter jejuni subsp. jejuni serotype O:6 (strain 81116 / NCTC 11828), this protein is Queuine tRNA-ribosyltransferase.